An 849-amino-acid polypeptide reads, in one-letter code: Mechanosensitive ion channel protein 7 (849 aa).

Residues 1–49 (MEFRKPFKSHSSYKQIISTGDQNEKTKKKKKLANLDDGDIAKTQSSGSS) are disordered. A compositionally biased stretch (polar residues) spans 9–21 (SHSSYKQIISTGD). 6 helical membrane-spanning segments follow: residues 231-251 (AITLLQWMSLIALVVALVLSL), 274-294 (LVLICGRLVSGCGIRIIVFFI), 313-333 (TAVQNCLWLGLVLLAWHFLFD), 344-364 (VLLLMSKILVCFLLSTVLWLI), 606-626 (MISFLTAIVIIVIWLILLEIA), and 642-662 (AFMFGNSLKTVFESIIFLFII).

This sequence belongs to the MscS (TC 1.A.23) family.

Its subcellular location is the membrane. Mechanosensitive channel that opens in response to stretch forces in the membrane lipid bilayer. The sequence is that of Mechanosensitive ion channel protein 7 (MSL7) from Arabidopsis thaliana (Mouse-ear cress).